The chain runs to 801 residues: MKDQLLVPLRRRPWTCQKCLQRLQLPRHQTRRSFETAASPFPRPLDSLPADYARTKTVDDDTLRRVFDSQQFWREFSQQRAAQPKPTGLVQNQYLTSPDGFRTFANVSLQKCQAIVSKVLAASTLEEYRTMARDLDRLSDLLCRVIDLSDFIRVIHPDPQVQEAATQAYALMFEYMNVLNTTTGLNDQLKKAAANPEVTSQWSDEEKIVAQILIKDFSNSAIHMPPHERQRFVNLSNDISQLGSSFVNGAEPAKSHVSVATNNLRGLDPILVQQIKRWNRTAAVPTTGMIPRLALRSVHDENVRREVYLASRTSSKRQLHRLEELLLKRAELAKLSGYESFAHMTLSDKMAKSPEAVSNFLTALVESNRKLVREELSQLQVMKGAPLQPWDHAYYVHQRVLQYSQARRSRELSAVPEFFSLGTVMQGLSRLFDRLYGVRLVPQEPAPGETWNPDVRRLDVVDEAGRHIAVIYCDLFSRPNKHPNPAHFTLRCSREISAEEVAECASLDQSSHPNDGMATAVDPVTQTLRQLPTIALVCDFPEPGTNGGGRPSLLSEHSVRTLFHEMGHAVHSILGQTRLQSISGTRCATDFAELPSVLMEHFATAPSVLALYARHWRTDEPLSEGMIRSMERDRTAHGSIYGAVENEAQILMALVDQAYHSRPADGGRIDSTALYQQVSQQHSSLPEPADATTPPTSWQGFFGHLYGYGATYYSYIFDRAIANKLWVDVFGAGRHAVDRAAGERYKNEVLRWGGGRSGWECVAGALGSANESNADGRLVEGGDQAMREVGRWGLGRDGVSG.

The N-terminal 41 residues, 1-41 (MKDQLLVPLRRRPWTCQKCLQRLQLPRHQTRRSFETAASPF), are a transit peptide targeting the mitochondrion. Residue histidine 564 participates in Zn(2+) binding. Glutamate 565 is an active-site residue. 2 residues coordinate Zn(2+): histidine 568 and histidine 571.

This sequence belongs to the peptidase M3 family. It depends on Zn(2+) as a cofactor.

The protein resides in the mitochondrion matrix. The enzyme catalyses Release of an N-terminal octapeptide as second stage of processing of some proteins imported into the mitochondrion.. Functionally, cleaves proteins, imported into the mitochondrion, to their mature size. While most mitochondrial precursor proteins are processed to the mature form in one step by mitochondrial processing peptidase (MPP), the sequential cleavage by MIP of an octapeptide after initial processing by MPP is a required step for a subgroup of nuclear-encoded precursor proteins destined for the matrix or the inner membrane. The polypeptide is Mitochondrial intermediate peptidase (oct1) (Aspergillus fumigatus (strain CBS 144.89 / FGSC A1163 / CEA10) (Neosartorya fumigata)).